The sequence spans 1125 residues: Exportin-6 (1125 aa).

A2 is subject to N-acetylalanine. The Importin N-terminal domain maps to 31-97; sequence IEELLNNFAQ…RSCLPKLLLA (67 aa). A Phosphoserine modification is found at S199. T201 and T204 each carry phosphothreonine. S208 and S224 each carry phosphoserine.

It belongs to the exportin family. As to quaternary structure, found in a complex with XPO6, Ran, ACTB and PFN1. Interacts with ACTB. Interacts with ACTB in a RanGTP-dependent manner.

The protein localises to the nucleus. The protein resides in the cytoplasm. Functionally, mediates the nuclear export of actin and profilin-actin complexes in somatic cells. The polypeptide is Exportin-6 (Xpo6) (Mus musculus (Mouse)).